Here is a 589-residue protein sequence, read N- to C-terminus: ATP-dependent lipid A-core flippase (589 aa).

The next 5 helical transmembrane spans lie at 29-49 (LLLV…TGFL), 70-90 (WLPV…YITD), 157-177 (VIGA…TILV), 261-281 (MIGA…ALAG), and 283-303 (LTAG…PGLK). The ABC transmembrane type-1 domain occupies 32–314 (VAALIAALIE…LTNVQNMVQR (283 aa)). Positions 346-582 (IEFRDVTARY…GGLYSHLHGM (237 aa)) constitute an ABC transporter domain. Residue 380–387 (GRSGSGKS) coordinates ATP.

This sequence belongs to the ABC transporter superfamily. Lipid exporter (TC 3.A.1.106) family. As to quaternary structure, homodimer.

The protein localises to the cell inner membrane. The enzyme catalyses ATP + H2O + lipid A-core oligosaccharideSide 1 = ADP + phosphate + lipid A-core oligosaccharideSide 2.. Its function is as follows. Involved in lipopolysaccharide (LPS) biosynthesis. Translocates lipid A-core from the inner to the outer leaflet of the inner membrane. Transmembrane domains (TMD) form a pore in the inner membrane and the ATP-binding domain (NBD) is responsible for energy generation. This Xanthomonas axonopodis pv. citri (strain 306) protein is ATP-dependent lipid A-core flippase.